A 229-amino-acid polypeptide reads, in one-letter code: Chromophore lyase CpcT/CpeT 1 (229 aa).

The protein belongs to the CpcT/CpeT biliprotein lyase family.

In terms of biological role, covalently attaches a chromophore to Cys residue(s) of phycobiliproteins. The sequence is that of Chromophore lyase CpcT/CpeT 1 from Gloeobacter violaceus (strain ATCC 29082 / PCC 7421).